Reading from the N-terminus, the 1452-residue chain is Protein clueless (1452 aa).

Disordered regions lie at residues 1 to 93 (MALE…SNGH) and 266 to 288 (KKTRPDSVDCTPPEYVTPGVSEP). The segment covering 8–24 (KNSNATATSDATATKAS) has biased composition (low complexity). Polar residues predominate over residues 42–59 (PIPNSNHQNSNQNLVNGN). Residues 68 to 77 (AKKKGKKNRN) are compositionally biased toward basic residues. A Phosphoserine modification is found at S272. The 243-residue stretch at 426–668 (RAEDAFSSKL…RTFPPDVNFL (243 aa)) folds into the Clu domain. 3 disordered regions span residues 726-775 (KQSE…GDTK), 962-1013 (AVSS…SSVS), and 1414-1452 (ANNNGEAEDAVPKDVEEQKEAGTQLTNGEKAAATEATSS). A compositionally biased stretch (basic and acidic residues) spans 750 to 766 (GADKTDVKEEKNEENEK). Positions 970 to 985 (KKRGNGGKHNKHKSSK) are enriched in basic residues. Low complexity predominate over residues 990–1013 (QQQQQATGNQNGSSSGSSNGSSVS). Positions 1423-1433 (AVPKDVEEQKE) are enriched in basic and acidic residues.

The protein belongs to the CLU family.

Its subcellular location is the cytoplasm. MRNA-binding protein involved in proper cytoplasmic distribution of mitochondria. This is Protein clueless from Drosophila erecta (Fruit fly).